We begin with the raw amino-acid sequence, 278 residues long: MQLCYQNTQITKLVNNWHTQGKTVAFVPTMGGLHQGHLSLIDIAKQKADKVIVSIFVNPAQFSKNEDLDSYPRTINADLTALKVNVDGVFIPNIKQIYPKGISKYIDVGKIGQILCGRTRPHFFNGVAQVVEILFGIVRPDVAVFGQKDYQQLLVIKQMVKNLSLNICIESGEIIREKSGLAMSTRNQYLSKNEAKIATNLHKTLSYFKHEILQNKKVYVLNELAKLDLKQHFKIDYLEVLDANNLKQITDNTHQIVILSAVFLGSVRLIDNIIFKKG.

30 to 37 (MGGLHQGH) lines the ATP pocket. Histidine 37 functions as the Proton donor in the catalytic mechanism. Glutamine 61 is a (R)-pantoate binding site. Glutamine 61 is a beta-alanine binding site. 146 to 149 (GQKD) contacts ATP. (R)-pantoate is bound at residue glutamine 152. Residues isoleucine 175 and 183 to 186 (MSTR) contribute to the ATP site.

The protein belongs to the pantothenate synthetase family. As to quaternary structure, homodimer.

It is found in the cytoplasm. It carries out the reaction (R)-pantoate + beta-alanine + ATP = (R)-pantothenate + AMP + diphosphate + H(+). It participates in cofactor biosynthesis; (R)-pantothenate biosynthesis; (R)-pantothenate from (R)-pantoate and beta-alanine: step 1/1. Catalyzes the condensation of pantoate with beta-alanine in an ATP-dependent reaction via a pantoyl-adenylate intermediate. The polypeptide is Pantothenate synthetase (Ruthia magnifica subsp. Calyptogena magnifica).